Here is a 420-residue protein sequence, read N- to C-terminus: UDP-N-acetylglucosamine 1-carboxyvinyltransferase (420 aa).

K22–N23 is a phosphoenolpyruvate binding site. R93 serves as a coordination point for UDP-N-acetyl-alpha-D-glucosamine. The Proton donor role is filled by C117. A 2-(S-cysteinyl)pyruvic acid O-phosphothioketal modification is found at C117. Residues D307 and I329 each contribute to the UDP-N-acetyl-alpha-D-glucosamine site.

The protein belongs to the EPSP synthase family. MurA subfamily.

It localises to the cytoplasm. The enzyme catalyses phosphoenolpyruvate + UDP-N-acetyl-alpha-D-glucosamine = UDP-N-acetyl-3-O-(1-carboxyvinyl)-alpha-D-glucosamine + phosphate. The protein operates within cell wall biogenesis; peptidoglycan biosynthesis. Functionally, cell wall formation. Adds enolpyruvyl to UDP-N-acetylglucosamine. This chain is UDP-N-acetylglucosamine 1-carboxyvinyltransferase, found in Cellvibrio japonicus (strain Ueda107) (Pseudomonas fluorescens subsp. cellulosa).